Consider the following 132-residue polypeptide: Small ribosomal subunit protein uS8 (132 aa).

It belongs to the universal ribosomal protein uS8 family. In terms of assembly, part of the 30S ribosomal subunit. Contacts proteins S5 and S12.

Functionally, one of the primary rRNA binding proteins, it binds directly to 16S rRNA central domain where it helps coordinate assembly of the platform of the 30S subunit. The polypeptide is Small ribosomal subunit protein uS8 (Thermoanaerobacter pseudethanolicus (strain ATCC 33223 / 39E) (Clostridium thermohydrosulfuricum)).